Consider the following 471-residue polypeptide: MKMPKTIGLVHFIGIGGIGMSGIAEVLHNLGHRVQGSDQAESANVQRLREKGIRISIGHKAENLGDAEVIVVSTAIKKDNPELIAAREKFLPVVRRAEMLAELMRFRNAIAIGGTHGKTTTTSMVAALLDAGGLDPTVINGGIINAYGTNARMGAGEWMVVEADESDGTFLKLPADIAVVTNIDPEHLDHYGSFDAVRSAFRQFVENVPFYGFGVLCLDHPEVQSMVGKIEDRKVVTYGENPQADVRFHNIRMDGATSIFDIEIRRRRTGQVIEIKDLRLPMPGRHNVSNATAAVAVAQRLGIKPEDIARGIASFGGVKRRFTLTGEWNGARIFDDYGHHPVEIKAVLRAAREACQGRIVAVHQPHRYSRLSSLFEDFTSCFNDADTILLAPVYSAGEEAIDGVNSEALVNRIKAAGHRDARHISGQEALAPVVAKIAQPGDFVVLLGAGSITYWAAALPKQLAEISGNRA.

114–120 lines the ATP pocket; the sequence is GTHGKTT.

The protein belongs to the MurCDEF family.

It is found in the cytoplasm. The enzyme catalyses UDP-N-acetyl-alpha-D-muramate + L-alanine + ATP = UDP-N-acetyl-alpha-D-muramoyl-L-alanine + ADP + phosphate + H(+). The protein operates within cell wall biogenesis; peptidoglycan biosynthesis. Cell wall formation. This Sinorhizobium medicae (strain WSM419) (Ensifer medicae) protein is UDP-N-acetylmuramate--L-alanine ligase.